An 800-amino-acid polypeptide reads, in one-letter code: Metabotropic glutamate receptor-like protein C (800 aa).

A signal peptide spans 1–21 (MKMKIIFLILILIFSINIIKC). Over 22–392 (DKEFKMLTLL…EVEFSQSLQY (371 aa)) the chain is Extracellular. Residues Asn69, Asn107, Asn166, Asn258, Asn276, Asn302, and Asn345 are each glycosylated (N-linked (GlcNAc...) asparagine). Residues 393–413 (GFSITTGVLIAITIIMMLGIV) traverse the membrane as a helical segment. Residues 414 to 426 (RYKSTPSIRSASP) are Cytoplasmic-facing. A helical membrane pass occupies residues 427 to 447 (IFLNFILAGGIIVYIGIIVWV). At 448-463 (GPANDHQCNARLWLVT) the chain is on the extracellular side. The chain crosses the membrane as a helical span at residues 464-484 (LGFSTLIGSLVVKNFRIWLIF). At 485 to 499 (DNPELKSISITNYQL) the chain is on the cytoplasmic side. The helical transmembrane segment at 500–520 (FPWVGACLVINIILMSILTSV) threads the bilayer. Over 521-551 (GDLREIDAQGIDSLGKYEFMKVCKMNSSGAS) the chain is Extracellular. Asn546 is a glycosylation site (N-linked (GlcNAc...) asparagine). Residues 552 to 572 (TLYTILAYFAALLLVGVFVSW) traverse the membrane as a helical segment. Topologically, residues 573–586 (KIRIVDIQEFNESK) are cytoplasmic. The helical transmembrane segment at 587-607 (AIANTLYAISFCLFVIVPLMI) threads the bilayer. The Extracellular portion of the chain corresponds to 608 to 616 (SPQDKQSET). Residues 617–637 (IVLCTAGLFITTAALLIIFTP) form a helical membrane-spanning segment. Over 638–800 (KFWRVFTLGD…NDTEEEDKNQ (163 aa)) the chain is Cytoplasmic. 2 disordered regions span residues 658-694 (QSNV…TETS) and 718-800 (EFDD…DKNQ). Positions 718–732 (EFDDNNIEQDNDNDN) are enriched in acidic residues. Residues 733 to 774 (DNNNNNNNNNNNNNNNNNNNNNNNNNNNNNNNNNNNNNNNNN) show a composition bias toward low complexity. Residues 781–791 (NDEKVEEKQQN) are compositionally biased toward basic and acidic residues.

This sequence in the N-terminal section; belongs to the BMP lipoprotein family. The protein in the C-terminal section; belongs to the G-protein coupled receptor 3 family. GABA-B receptor subfamily.

It localises to the membrane. In Dictyostelium discoideum (Social amoeba), this protein is Metabotropic glutamate receptor-like protein C (grlC).